A 243-amino-acid chain; its full sequence is tRNA (guanine-N(1)-)-methyltransferase (243 aa).

Residues glycine 113 and 133–138 (IGDFVL) each bind S-adenosyl-L-methionine.

The protein belongs to the RNA methyltransferase TrmD family. Homodimer.

The protein localises to the cytoplasm. The catalysed reaction is guanosine(37) in tRNA + S-adenosyl-L-methionine = N(1)-methylguanosine(37) in tRNA + S-adenosyl-L-homocysteine + H(+). Its function is as follows. Specifically methylates guanosine-37 in various tRNAs. The protein is tRNA (guanine-N(1)-)-methyltransferase of Bacillus licheniformis (strain ATCC 14580 / DSM 13 / JCM 2505 / CCUG 7422 / NBRC 12200 / NCIMB 9375 / NCTC 10341 / NRRL NRS-1264 / Gibson 46).